The chain runs to 341 residues: Anthranilate phosphoribosyltransferase (341 aa).

Residues Gly-79, 82-83 (GD), Thr-87, 89-92 (NIST), 107-115 (KHGNRAVSS), and Ser-119 contribute to the 5-phospho-alpha-D-ribose 1-diphosphate site. Residue Gly-79 participates in anthranilate binding. A Mg(2+)-binding site is contributed by Ser-91. Position 110 (Asn-110) interacts with anthranilate. Arg-165 is an anthranilate binding site. Positions 224 and 225 each coordinate Mg(2+).

The protein belongs to the anthranilate phosphoribosyltransferase family. Homodimer. It depends on Mg(2+) as a cofactor.

The catalysed reaction is N-(5-phospho-beta-D-ribosyl)anthranilate + diphosphate = 5-phospho-alpha-D-ribose 1-diphosphate + anthranilate. It participates in amino-acid biosynthesis; L-tryptophan biosynthesis; L-tryptophan from chorismate: step 2/5. Catalyzes the transfer of the phosphoribosyl group of 5-phosphorylribose-1-pyrophosphate (PRPP) to anthranilate to yield N-(5'-phosphoribosyl)-anthranilate (PRA). The polypeptide is Anthranilate phosphoribosyltransferase (Bacillus mycoides (strain KBAB4) (Bacillus weihenstephanensis)).